The primary structure comprises 134 residues: DNA-directed RNA polymerase subunit omega (134 aa).

The tract at residues 76–102 (EVDEPEPDPASMIAAGGAAAADSEEQD) is disordered.

It belongs to the RNA polymerase subunit omega family. In terms of assembly, the RNAP catalytic core consists of 2 alpha, 1 beta, 1 beta' and 1 omega subunit. When a sigma factor is associated with the core the holoenzyme is formed, which can initiate transcription.

It carries out the reaction RNA(n) + a ribonucleoside 5'-triphosphate = RNA(n+1) + diphosphate. Its function is as follows. Promotes RNA polymerase assembly. Latches the N- and C-terminal regions of the beta' subunit thereby facilitating its interaction with the beta and alpha subunits. The polypeptide is DNA-directed RNA polymerase subunit omega (Rhizobium etli (strain ATCC 51251 / DSM 11541 / JCM 21823 / NBRC 15573 / CFN 42)).